A 116-amino-acid polypeptide reads, in one-letter code: Putative pterin-4-alpha-carbinolamine dehydratase 1 (116 aa).

This sequence belongs to the pterin-4-alpha-carbinolamine dehydratase family.

It catalyses the reaction (4aS,6R)-4a-hydroxy-L-erythro-5,6,7,8-tetrahydrobiopterin = (6R)-L-erythro-6,7-dihydrobiopterin + H2O. The chain is Putative pterin-4-alpha-carbinolamine dehydratase 1 from Cupriavidus pinatubonensis (strain JMP 134 / LMG 1197) (Cupriavidus necator (strain JMP 134)).